The chain runs to 405 residues: Phosphopentomutase (405 aa).

6 residues coordinate Mn(2+): Asp-10, Asp-303, His-308, Asp-344, His-345, and His-356.

It belongs to the phosphopentomutase family. It depends on Mn(2+) as a cofactor.

Its subcellular location is the cytoplasm. It carries out the reaction 2-deoxy-alpha-D-ribose 1-phosphate = 2-deoxy-D-ribose 5-phosphate. The enzyme catalyses alpha-D-ribose 1-phosphate = D-ribose 5-phosphate. It functions in the pathway carbohydrate degradation; 2-deoxy-D-ribose 1-phosphate degradation; D-glyceraldehyde 3-phosphate and acetaldehyde from 2-deoxy-alpha-D-ribose 1-phosphate: step 1/2. In terms of biological role, isomerase that catalyzes the conversion of deoxy-ribose 1-phosphate (dRib-1-P) and ribose 1-phosphate (Rib-1-P) to deoxy-ribose 5-phosphate (dRib-5-P) and ribose 5-phosphate (Rib-5-P), respectively. The sequence is that of Phosphopentomutase from Shewanella denitrificans (strain OS217 / ATCC BAA-1090 / DSM 15013).